A 41-amino-acid chain; its full sequence is Photosystem I reaction center subunit IX (41 aa).

A helical transmembrane segment spans residues 7-27 (YLSTAPVVAFAWITITAGLLI).

It belongs to the PsaJ family.

Its subcellular location is the plastid. The protein resides in the chloroplast thylakoid membrane. In terms of biological role, may help in the organization of the PsaE and PsaF subunits. The protein is Photosystem I reaction center subunit IX of Oedogonium cardiacum (Filamentous green alga).